The chain runs to 616 residues: Dihydroxy-acid dehydratase (616 aa).

D81 is a Mg(2+) binding site. [2Fe-2S] cluster is bound at residue C122. The Mg(2+) site is built by D123 and K124. N6-carboxylysine is present on K124. C195 contacts [2Fe-2S] cluster. E491 serves as a coordination point for Mg(2+). S517 acts as the Proton acceptor in catalysis.

The protein belongs to the IlvD/Edd family. In terms of assembly, homodimer. It depends on [2Fe-2S] cluster as a cofactor. Mg(2+) is required as a cofactor.

It catalyses the reaction (2R)-2,3-dihydroxy-3-methylbutanoate = 3-methyl-2-oxobutanoate + H2O. It carries out the reaction (2R,3R)-2,3-dihydroxy-3-methylpentanoate = (S)-3-methyl-2-oxopentanoate + H2O. It participates in amino-acid biosynthesis; L-isoleucine biosynthesis; L-isoleucine from 2-oxobutanoate: step 3/4. It functions in the pathway amino-acid biosynthesis; L-valine biosynthesis; L-valine from pyruvate: step 3/4. Its function is as follows. Functions in the biosynthesis of branched-chain amino acids. Catalyzes the dehydration of (2R,3R)-2,3-dihydroxy-3-methylpentanoate (2,3-dihydroxy-3-methylvalerate) into 2-oxo-3-methylpentanoate (2-oxo-3-methylvalerate) and of (2R)-2,3-dihydroxy-3-methylbutanoate (2,3-dihydroxyisovalerate) into 2-oxo-3-methylbutanoate (2-oxoisovalerate), the penultimate precursor to L-isoleucine and L-valine, respectively. The polypeptide is Dihydroxy-acid dehydratase (Yersinia pseudotuberculosis serotype O:1b (strain IP 31758)).